We begin with the raw amino-acid sequence, 617 residues long: MKGTFFHNQRFLCFSILFMWIKTYVIYKLGFDLQIDTLLEELMLLVNPLSFILPLFGIGLFLKENKQRAFLLIANLVLTVILISNTIFYGFYIDFITIPVLFQASNMSDMGSSVKELFHPLFIALFVDLVFLLLFARKTKHPQTKAAPHTIKRYYAASCGMLLCTLALAEVQQPKLLAHSFDREMLVKSIGLFQFHIYDTISQTVNISAKAFADEDSITAIKNYTEADYSKPDQSKFGLAKGRNVIFVTLESTQSFVLNEKVNGKEITPFMNDLIKKSYSFDHFYQQTEQGKTSDSEFIVANSLYPSLSGAVFFTKSDHQFHTMYKSLKQHDYYSAVFHANHKTFWNRDVMYDTFGIDRFFDVDDFHVTPGTSTSWGLKDKEFLEQSAKKLKSLPQPFYSSFITLTNHFPFEIDEKDQLIDEFDSSSDLLNRYVTTVRYEDEALKHFIKKLKDEGLYENSMIVFMGDHYGISEAHNEAMAEFLGKDEITPYDNVQLQRVPFIIHIPGITDQQPETIPDAGGQVDVRPTLMHLLGVETKGDIQFGNDLLSGDRTPFAVLRNGSFITNDYVYTKNTCYSQKTGEVLEDQDACLPYKEKANEELSLSDKILNGDLLRFSE.

Topologically, residues 1 to 10 (MKGTFFHNQR) are cytoplasmic. Residues 11–31 (FLCFSILFMWIKTYVIYKLGF) form a helical membrane-spanning segment. The Extracellular segment spans residues 32-41 (DLQIDTLLEE). A helical membrane pass occupies residues 42–62 (LMLLVNPLSFILPLFGIGLFL). At 63-68 (KENKQR) the chain is on the cytoplasmic side. The helical transmembrane segment at 69-89 (AFLLIANLVLTVILISNTIFY) threads the bilayer. Over 90 to 115 (GFYIDFITIPVLFQASNMSDMGSSVK) the chain is Extracellular. The chain crosses the membrane as a helical span at residues 116–136 (ELFHPLFIALFVDLVFLLLFA). At 137–153 (RKTKHPQTKAAPHTIKR) the chain is on the cytoplasmic side. The chain crosses the membrane as a helical span at residues 154–171 (YYAASCGMLLCTLALAEV). Topologically, residues 172-617 (QQPKLLAHSF…LNGDLLRFSE (446 aa)) are extracellular. Residues E251 and T293 each coordinate Mn(2+). T293 is a catalytic residue. H408 is a substrate binding site. Mn(2+)-binding residues include D467 and H468.

This sequence belongs to the LTA synthase family. Proteolytically cleaved.

It localises to the cell membrane. The protein localises to the secreted. This chain is Lipoteichoic acid synthase-like YvgJ (yvgJ), found in Bacillus subtilis (strain 168).